The chain runs to 430 residues: Evolutionarily conserved signaling intermediate in Toll pathway, mitochondrial (430 aa).

Residues 1-48 constitute a mitochondrion transit peptide; the sequence is MSWVQATLLARGLCRAWGGICRAALPGTSISQVPRQLPRGLHCSAAPH. Positions 41-66 are disordered; sequence LHCSAAPHSSEQSLVSSPPEPRQRPT. The span at 47–56 shows a compositional bias: polar residues; sequence PHSSEQSLVS. A Glycyl lysine isopeptide (Lys-Gly) (interchain with G-Cter in ubiquitin) cross-link involves residue Lys-372. A disordered region spans residues 400 to 430; it reads LHTSSAGLEEPPPPEDHEEDDSRQRQQQGQS. Positions 411–420 are enriched in acidic residues; it reads PPPEDHEEDD.

It belongs to the ECSIT family. As to quaternary structure, interacts with MAP3K1, SMAD4 and TRAF6. Interacts with SMAD1 only after BMP4-treatment. Part of the mitochondrial complex I assembly/MCIA complex that comprises at least the core subunits TMEM126B, NDUFAF1, ECSIT and ACAD9 and complement subunits such as COA1 and TMEM186. Interacts with NDUFAF1. Interacts with ACAD9. Interacts with TRIM59. Interacts with TMEM70 and TMEM242. Interacts (when ubiquitinated) with NF-kappa-B subunits RELA and NFKB1. Interacts with RIGI, IFIT1 and MAVS; these interactions promote RLR-mediated type I IFN induction. Interacts with SQSTM1; this interaction inhibits TLR4 signaling via functional regulation of the TRAF6-ECSIT complex. Interacts with cereblon/CRBN; this interaction inhibits the ubiquitination of ECSIT. In terms of processing, ubiquitinated on Lys-372; leading to translocation in the nucleus together with RELA and NFKB1 and expression of NF-kappa-B-dependent genes.

The protein resides in the cytoplasm. The protein localises to the nucleus. Its subcellular location is the mitochondrion. Functionally, adapter protein that plays a role in different signaling pathways including TLRs and IL-1 pathways or innate antiviral induction signaling. Plays a role in the activation of NF-kappa-B by forming a signal complex with TRAF6 and TAK1/MAP3K7 to activate TAK1/MAP3K7 leading to activation of IKKs. Once ubiquitinated, interacts with the dissociated RELA and NFKB1 proteins and translocates to the nucleus where it induces NF-kappa-B-dependent gene expression. Plays a role in innate antiviral immune response by bridging the pattern recognition receptors RIGI and MDA5/IFIT1 to the MAVS complex at the mitochondrion. Promotes proteolytic activation of MAP3K1. Involved in the BMP signaling pathway. Required for normal embryonic development. Its function is as follows. As part of the MCIA complex, involved in the assembly of the mitochondrial complex I. The sequence is that of Evolutionarily conserved signaling intermediate in Toll pathway, mitochondrial from Macaca fascicularis (Crab-eating macaque).